The primary structure comprises 443 residues: Na(+)-translocating ferredoxin:NAD(+) oxidoreductase complex subunit C (443 aa).

4Fe-4S ferredoxin-type domains are found at residues 359-391 (ESAK…IAEY) and 398-428 (DKCE…VSSI). [4Fe-4S] cluster contacts are provided by Cys-369, Cys-372, Cys-375, Cys-379, Cys-408, Cys-411, Cys-414, and Cys-418.

The protein belongs to the 4Fe4S bacterial-type ferredoxin family. RnfC subfamily. In terms of assembly, the complex is composed of six subunits: RnfA, RnfB, RnfC, RnfD, RnfE and RnfG. The cofactor is [4Fe-4S] cluster.

Its subcellular location is the cell membrane. The enzyme catalyses 2 reduced [2Fe-2S]-[ferredoxin] + Na(+)(in) + NAD(+) + H(+) = 2 oxidized [2Fe-2S]-[ferredoxin] + Na(+)(out) + NADH. Its function is as follows. Part of a membrane-bound complex that couples electron transfer with translocation of ions across the membrane. Couples electron transfer from reduced ferredoxin to NAD(+) with electrogenic movement of Na(+) out of the cell. Involved in caffeate respiration. The chain is Na(+)-translocating ferredoxin:NAD(+) oxidoreductase complex subunit C from Acetobacterium woodii (strain ATCC 29683 / DSM 1030 / JCM 2381 / KCTC 1655 / WB1).